The chain runs to 181 residues: uncharacterized protein (181 aa).

Residues 1-19 (MRRLLACSAGVLCFSQLGA) form the signal peptide.

This is an uncharacterized protein from Treponema pallidum (strain Nichols).